Consider the following 646-residue polypeptide: Chaperone protein DnaK (646 aa).

T198 carries the phosphothreonine; by autocatalysis modification. Positions 603–646 (EQAQQAGGAEGFDPNAFQGGDAGQQKADDGVVDAEFTEVKDDKK) are disordered. Residues 618 to 627 (AFQGGDAGQQ) show a composition bias toward low complexity.

The protein belongs to the heat shock protein 70 family.

Acts as a chaperone. The sequence is that of Chaperone protein DnaK from Acinetobacter baumannii (strain AB307-0294).